A 364-amino-acid chain; its full sequence is Dihydroorotate dehydrogenase (quinone) (364 aa).

Residues 61–65 (AGYDK) and Thr85 each bind FMN. Lys65 provides a ligand contact to substrate. 110–114 (NRLGF) is a binding site for substrate. Asn139 and Asn170 together coordinate FMN. Asn170 contacts substrate. Ser173 acts as the Nucleophile in catalysis. Residue Asn175 coordinates substrate. Residues Lys215 and Ser243 each coordinate FMN. 244–245 (NT) is a binding site for substrate. FMN is bound by residues Gly266, Gly295, and 316-317 (YS).

This sequence belongs to the dihydroorotate dehydrogenase family. Type 2 subfamily. In terms of assembly, monomer. Requires FMN as cofactor.

Its subcellular location is the cell membrane. It catalyses the reaction (S)-dihydroorotate + a quinone = orotate + a quinol. Its pathway is pyrimidine metabolism; UMP biosynthesis via de novo pathway; orotate from (S)-dihydroorotate (quinone route): step 1/1. Its function is as follows. Catalyzes the conversion of dihydroorotate to orotate with quinone as electron acceptor. The protein is Dihydroorotate dehydrogenase (quinone) of Brucella melitensis biotype 2 (strain ATCC 23457).